The following is a 196-amino-acid chain: Probable malonic semialdehyde reductase RutE (196 aa).

The protein belongs to the nitroreductase family. HadB/RutE subfamily. The cofactor is FMN.

The catalysed reaction is 3-hydroxypropanoate + NADP(+) = 3-oxopropanoate + NADPH + H(+). Its function is as follows. May reduce toxic product malonic semialdehyde to 3-hydroxypropionic acid, which is excreted. This Escherichia coli O6:H1 (strain CFT073 / ATCC 700928 / UPEC) protein is Probable malonic semialdehyde reductase RutE.